The primary structure comprises 283 residues: Shikimate dehydrogenase (NADP(+)) (283 aa).

Shikimate is bound by residues 18 to 20 (SYS) and T66. The active-site Proton acceptor is the K70. Positions 91 and 106 each coordinate shikimate. NADP(+) contacts are provided by residues 130–134 (GAGGA) and M225. Shikimate is bound at residue Y227. NADP(+) is bound at residue G248.

It belongs to the shikimate dehydrogenase family. Homodimer.

The catalysed reaction is shikimate + NADP(+) = 3-dehydroshikimate + NADPH + H(+). It participates in metabolic intermediate biosynthesis; chorismate biosynthesis; chorismate from D-erythrose 4-phosphate and phosphoenolpyruvate: step 4/7. Functionally, involved in the biosynthesis of the chorismate, which leads to the biosynthesis of aromatic amino acids. Catalyzes the reversible NADPH linked reduction of 3-dehydroshikimate (DHSA) to yield shikimate (SA). This Pelodictyon phaeoclathratiforme (strain DSM 5477 / BU-1) protein is Shikimate dehydrogenase (NADP(+)).